The following is a 133-amino-acid chain: Small ribosomal subunit protein bS6 (133 aa).

Basic and acidic residues predominate over residues 106–125 (REERVERAPRAPRPEVKAEP). Residues 106–133 (REERVERAPRAPRPEVKAEPEAEATAEA) are disordered.

The protein belongs to the bacterial ribosomal protein bS6 family.

Its function is as follows. Binds together with bS18 to 16S ribosomal RNA. This is Small ribosomal subunit protein bS6 from Psychromonas ingrahamii (strain DSM 17664 / CCUG 51855 / 37).